The following is a 406-amino-acid chain: MKNEVKKVVLAYSGGLDTSIILKWLQDEYNCEVVTFTADIGQGEELEPARKKALSLGIKEENIFIKDLRDEFVKDYVFPMFRANAIYEGEYLLGTSIARPLIAKTQAQIALQTGADAVSHGATGKGNDQVRFELGYLAFNPDLKIIAPWREWDLNSREKLLAYAQKHGIDISKKKGKSPYSMDANLLHISYEGLVLEDPAHAPEEDMWRWSKSPKDAPHESEIIELDFQKGDLVAINGEKLSPAGLLTKLNELGCKHGIGRLDIVENRYVGMKSRGCYETPGGTILLKAHRALESITLDREAAHLKDELMPKYASLIYNGYWFSPERMMLQALIDESQIHANGRVKLELYKGNVMVIGRQSANDSLFNAAYCTFEEDEVYNQKDAAGFIKLNALRFIIAGKNGRKF.

ATP is bound by residues alanine 11–serine 19 and alanine 38. L-citrulline-binding residues include tyrosine 91 and serine 96. Glycine 121 provides a ligand contact to ATP. Threonine 123, asparagine 127, and aspartate 128 together coordinate L-aspartate. Residue asparagine 127 coordinates L-citrulline. The L-citrulline site is built by arginine 131, serine 181, serine 190, glutamate 266, and tyrosine 278.

The protein belongs to the argininosuccinate synthase family. Type 1 subfamily. As to quaternary structure, homotetramer.

The protein resides in the cytoplasm. The enzyme catalyses L-citrulline + L-aspartate + ATP = 2-(N(omega)-L-arginino)succinate + AMP + diphosphate + H(+). Its pathway is amino-acid biosynthesis; L-arginine biosynthesis; L-arginine from L-ornithine and carbamoyl phosphate: step 2/3. The sequence is that of Argininosuccinate synthase from Campylobacter jejuni subsp. doylei (strain ATCC BAA-1458 / RM4099 / 269.97).